We begin with the raw amino-acid sequence, 161 residues long: Protein-export protein SecB (161 aa).

Belongs to the SecB family. As to quaternary structure, homotetramer, a dimer of dimers. One homotetramer interacts with 1 SecA dimer.

The protein localises to the cytoplasm. Its function is as follows. One of the proteins required for the normal export of preproteins out of the cell cytoplasm. It is a molecular chaperone that binds to a subset of precursor proteins, maintaining them in a translocation-competent state. It also specifically binds to its receptor SecA. This is Protein-export protein SecB from Shewanella putrefaciens (strain CN-32 / ATCC BAA-453).